Here is a 148-residue protein sequence, read N- to C-terminus: Large ribosomal subunit protein uL15 (148 aa).

The span at 1–12 shows a compositional bias: basic and acidic residues; the sequence is MSEPIKLHDLRP. Positions 1–52 are disordered; it reads MSEPIKLHDLRPAKGANKPKTRVGRGEASKGKTAGRGTKGTKARKQVSAAFE.

The protein belongs to the universal ribosomal protein uL15 family. As to quaternary structure, part of the 50S ribosomal subunit.

Its function is as follows. Binds to the 23S rRNA. This Corynebacterium diphtheriae (strain ATCC 700971 / NCTC 13129 / Biotype gravis) protein is Large ribosomal subunit protein uL15.